The chain runs to 361 residues: Aminomethyltransferase (361 aa).

It belongs to the GcvT family. In terms of assembly, the glycine cleavage system is composed of four proteins: P, T, L and H.

It carries out the reaction N(6)-[(R)-S(8)-aminomethyldihydrolipoyl]-L-lysyl-[protein] + (6S)-5,6,7,8-tetrahydrofolate = N(6)-[(R)-dihydrolipoyl]-L-lysyl-[protein] + (6R)-5,10-methylene-5,6,7,8-tetrahydrofolate + NH4(+). Functionally, the glycine cleavage system catalyzes the degradation of glycine. This chain is Aminomethyltransferase, found in Herpetosiphon aurantiacus (strain ATCC 23779 / DSM 785 / 114-95).